Consider the following 164-residue polypeptide: Lipoprotein signal peptidase (164 aa).

Transmembrane regions (helical) follow at residues 2-22 (MSLL…AIVL), 40-60 (VVIT…AFSF), 70-90 (WLFS…MAKA), and 99-119 (LAYS…VVYG). Residues aspartate 123 and aspartate 142 contribute to the active site. Residues 138-158 (FNVADMAISCGAVFIILDGFI) traverse the membrane as a helical segment.

Belongs to the peptidase A8 family.

It is found in the cell inner membrane. The enzyme catalyses Release of signal peptides from bacterial membrane prolipoproteins. Hydrolyzes -Xaa-Yaa-Zaa-|-(S,diacylglyceryl)Cys-, in which Xaa is hydrophobic (preferably Leu), and Yaa (Ala or Ser) and Zaa (Gly or Ala) have small, neutral side chains.. It functions in the pathway protein modification; lipoprotein biosynthesis (signal peptide cleavage). Its function is as follows. This protein specifically catalyzes the removal of signal peptides from prolipoproteins. The sequence is that of Lipoprotein signal peptidase from Tolumonas auensis (strain DSM 9187 / NBRC 110442 / TA 4).